Consider the following 155-residue polypeptide: Protein PtsT (155 aa).

The sequence is that of Protein PtsT (ptsT) from Geobacillus stearothermophilus (Bacillus stearothermophilus).